Consider the following 70-residue polypeptide: Phycobilisome 8.1 kDa linker polypeptide, phycocyanin-associated, rod (70 aa).

Positions 5 to 63 (SRSFQVEVSGLHQNEVTNQNNYPIRSSGSVFITIPFSRFNEELQRINRLGGKIVNIQPL) constitute a CpcD-like domain.

The protein belongs to the phycobilisome linker protein family.

Its subcellular location is the cellular thylakoid membrane. Its function is as follows. Rod linker protein, associated with phycocyanin. Linker polypeptides determine the state of aggregation and the location of the disk-shaped phycobiliprotein units within the phycobilisome and modulate their spectroscopic properties in order to mediate a directed and optimal energy transfer. This chain is Phycobilisome 8.1 kDa linker polypeptide, phycocyanin-associated, rod (cpcD3), found in Microchaete diplosiphon (Fremyella diplosiphon).